Here is a 201-residue protein sequence, read N- to C-terminus: MANNFSQLARKSKTNSPIEKVSKEQTGTPSLEIYKLGDDVLRENAKRISKVDNSIRNLAKDMLQSMYAAKGIGLAAPQIGIKKELLVIDVNFEDAAAEPLILINPEITDYGTTLNSYEEGCLSIPGVYLNVVRPSTIKLRFRDEMGRPRKMKADGLLARCIQHEMDHLNGVLFVDRVTSKEDLNKELIKEGFHQKDVIPIK.

Residues 1-17 (MANNFSQLARKSKTNSP) show a composition bias toward polar residues. The interval 1-24 (MANNFSQLARKSKTNSPIEKVSKE) is disordered. Fe cation-binding residues include Cys121 and His163. Residue Glu164 is part of the active site. Position 167 (His167) interacts with Fe cation.

Belongs to the polypeptide deformylase family. Requires Fe(2+) as cofactor.

It catalyses the reaction N-terminal N-formyl-L-methionyl-[peptide] + H2O = N-terminal L-methionyl-[peptide] + formate. Removes the formyl group from the N-terminal Met of newly synthesized proteins. Requires at least a dipeptide for an efficient rate of reaction. N-terminal L-methionine is a prerequisite for activity but the enzyme has broad specificity at other positions. This chain is Peptide deformylase, found in Prochlorococcus marinus subsp. pastoris (strain CCMP1986 / NIES-2087 / MED4).